The chain runs to 81 residues: Acyl carrier protein (81 aa).

Positions 4–79 (SEILEKVKAI…DVLDFINNKV (76 aa)) constitute a Carrier domain. Position 39 is an O-(pantetheine 4'-phosphoryl)serine (Ser39).

Belongs to the acyl carrier protein (ACP) family. Post-translationally, 4'-phosphopantetheine is transferred from CoA to a specific serine of apo-ACP by AcpS. This modification is essential for activity because fatty acids are bound in thioester linkage to the sulfhydryl of the prosthetic group.

The protein resides in the cytoplasm. Its pathway is lipid metabolism; fatty acid biosynthesis. Functionally, carrier of the growing fatty acid chain in fatty acid biosynthesis. This Thermosynechococcus vestitus (strain NIES-2133 / IAM M-273 / BP-1) protein is Acyl carrier protein.